An 819-amino-acid chain; its full sequence is ATP-dependent DNA helicase PIF4 (819 aa).

Residues 1-84 (MLLNSTRTLL…RQASSAGHND (84 aa)) constitute a mitochondrion transit peptide. Residues 76 to 101 (QASSAGHNDLGLQEKEKSSGDESAFS) form a disordered region. Residue 126–133 (GGAGVGKS) coordinates ATP. Residues 734–754 (HIIYVAASRVKKFSQLRMINV) mediate DNA binding.

Belongs to the helicase family. PIF1 subfamily. Monomer. It depends on Mg(2+) as a cofactor.

The protein resides in the mitochondrion matrix. It localises to the kinetoplast. The catalysed reaction is Couples ATP hydrolysis with the unwinding of duplex DNA at the replication fork by translocating in the 5'-3' direction. This creates two antiparallel DNA single strands (ssDNA). The leading ssDNA polymer is the template for DNA polymerase III holoenzyme which synthesizes a continuous strand.. It catalyses the reaction ATP + H2O = ADP + phosphate + H(+). Functionally, DNA-dependent ATPase and 5'-3' DNA helicase required for the maintenance of mitochondrial (kinetoplast) genome stability. This Trypanosoma brucei brucei (strain 927/4 GUTat10.1) protein is ATP-dependent DNA helicase PIF4.